We begin with the raw amino-acid sequence, 119 residues long: NADH-quinone oxidoreductase subunit A (119 aa).

3 helical membrane-spanning segments follow: residues 7-27 (YPVL…VSIG), 63-83 (LVAI…PWGV), and 88-108 (IGWP…LGFA).

This sequence belongs to the complex I subunit 3 family. In terms of assembly, NDH-1 is composed of 14 different subunits. Subunits NuoA, H, J, K, L, M, N constitute the membrane sector of the complex.

The protein localises to the cell inner membrane. The enzyme catalyses a quinone + NADH + 5 H(+)(in) = a quinol + NAD(+) + 4 H(+)(out). Its function is as follows. NDH-1 shuttles electrons from NADH, via FMN and iron-sulfur (Fe-S) centers, to quinones in the respiratory chain. The immediate electron acceptor for the enzyme in this species is believed to be ubiquinone. Couples the redox reaction to proton translocation (for every two electrons transferred, four hydrogen ions are translocated across the cytoplasmic membrane), and thus conserves the redox energy in a proton gradient. This chain is NADH-quinone oxidoreductase subunit A, found in Burkholderia ambifaria (strain MC40-6).